Consider the following 326-residue polypeptide: Vitamin B12 import system permease protein BtuC (326 aa).

9 helical membrane-spanning segments follow: residues 17–39, 59–81, 88–107, 111–133, 146–168, 188–205, 242–264, 274–296, and 303–322; these read LSLS…QWIA, RTLA…QALF, PGLL…AVLL, QLAG…LILL, LLAG…YFST, WQQS…IWIC, MVGV…PHIL, VLLP…VARL, and LPIG…WLLL.

It belongs to the binding-protein-dependent transport system permease family. FecCD subfamily. The complex is composed of two ATP-binding proteins (BtuD), two transmembrane proteins (BtuC) and a solute-binding protein (BtuF).

Its subcellular location is the cell inner membrane. Functionally, part of the ABC transporter complex BtuCDF involved in vitamin B12 import. Involved in the translocation of the substrate across the membrane. The chain is Vitamin B12 import system permease protein BtuC from Salmonella paratyphi A (strain ATCC 9150 / SARB42).